The sequence spans 780 residues: Lethal(3)malignant brain tumor-like protein 3 (780 aa).

The segment at 1 to 64 is interaction with RBPJ. Required for transcription repressor activity on Notch target genes; it reads MTESASSTSG…VKKATATTTW (64 aa). Residues 149 to 220 are disordered; it reads DKDQKEERDV…RKRRGDSAVL (72 aa). Composition is skewed to acidic residues over residues 157–166 and 185–194; these read DVEEDNEEED and EDGEERDDEM. MBT repeat units lie at residues 232–332, 340–439, and 448–543; these read WCWA…LHPP, FNWQ…LITP, and FSWD…LQPP. Residues 549–593 form a CCHHC-type; degenerate zinc finger; the sequence is LMEASEHGGCSTPGCKGIGHFKRARHLGPHSAANCPYSEINLNKD. The tract at residues 597–665 is disordered; that stretch reads PDRLSGEMPP…GAREEPTVQQ (69 aa). Residues 600–710 are interaction with DCAF5; it reads LSGEMPPASP…PASKVSKWST (111 aa). Ser-608 bears the Phosphoserine mark. Residue Lys-637 forms a Glycyl lysine isopeptide (Lys-Gly) (interchain with G-Cter in SUMO2) linkage. Residues 643 to 661 show a composition bias toward basic and acidic residues; the sequence is RTESEMRTSHEARGAREEP. A Glycyl lysine isopeptide (Lys-Gly) (interchain with G-Cter in SUMO2) cross-link involves residue Lys-704. The 65-residue stretch at 708–772 folds into the SAM domain; that stretch reads WSTDEVSEFI…FNSILMFKAA (65 aa).

Interacts with RNF2. Interacts (via SAM domain) with SAMD1 (via SAM domain); the interaction mediates L3MBTL3 binding to chromatin. Interacts with RBPJ; the interaction is required for L3MBTL3 localization to chromatin and is impaired by Notch-derived peptides containing the intracellular domain (NICD). Interacts (via SAM domain) with KDM1A. Interacts with DCAF5. Interacts with DNMT1. Interacts with E2F1. Interacts with SOX2. Interacts with SFMBT1.

Its subcellular location is the nucleus. Is a negative regulator of Notch target genes expression, required for RBPJ-mediated transcriptional repression. It recruits KDM1A to Notch-responsive elements and promotes KDM1A-mediated H3K4me demethylation. Involved in the regulation of ubiquitin-dependent degradation of a set of methylated non-histone proteins, including SOX2, DNMT1 and E2F1. It acts as an adapter recruiting the CRL4-DCAF5 E3 ubiquitin ligase complex to methylated target proteins. Required for normal maturation of myeloid progenitor cells. The protein is Lethal(3)malignant brain tumor-like protein 3 of Homo sapiens (Human).